A 1220-amino-acid chain; its full sequence is DNA-directed RNA polymerase subunit beta (1220 aa).

The protein belongs to the RNA polymerase beta chain family. As to quaternary structure, the RNAP catalytic core consists of 2 alpha, 1 beta, 1 beta' and 1 omega subunit. When a sigma factor is associated with the core the holoenzyme is formed, which can initiate transcription.

The enzyme catalyses RNA(n) + a ribonucleoside 5'-triphosphate = RNA(n+1) + diphosphate. Functionally, DNA-dependent RNA polymerase catalyzes the transcription of DNA into RNA using the four ribonucleoside triphosphates as substrates. This Mesomycoplasma hyopneumoniae (strain J / ATCC 25934 / NCTC 10110) (Mycoplasma hyopneumoniae) protein is DNA-directed RNA polymerase subunit beta.